A 67-amino-acid polypeptide reads, in one-letter code: Beta-defensin 103A (67 aa).

Positions 1 to 22 are cleaved as a signal peptide; the sequence is MRIHYLLFALLFLFLVPVPGHG. Intrachain disulfides connect cysteine 33-cysteine 62, cysteine 40-cysteine 55, and cysteine 45-cysteine 63.

The protein belongs to the beta-defensin family.

The protein resides in the secreted. Functionally, exhibits antimicrobial activity against Gram-positive and Gram-negative bacteria. The sequence is that of Beta-defensin 103A (DEFB103A) from Pan troglodytes (Chimpanzee).